The primary structure comprises 210 residues: Uracil phosphoribosyltransferase (210 aa).

5-phospho-alpha-D-ribose 1-diphosphate contacts are provided by residues Arg78, Arg103, and 130 to 138; that span reads DPMLATGGT. Residues Ile193 and 198–200 contribute to the uracil site; that span reads GDA. Asp199 contacts 5-phospho-alpha-D-ribose 1-diphosphate.

The protein belongs to the UPRTase family. The cofactor is Mg(2+).

It carries out the reaction UMP + diphosphate = 5-phospho-alpha-D-ribose 1-diphosphate + uracil. Its pathway is pyrimidine metabolism; UMP biosynthesis via salvage pathway; UMP from uracil: step 1/1. With respect to regulation, allosterically activated by GTP. Functionally, catalyzes the conversion of uracil and 5-phospho-alpha-D-ribose 1-diphosphate (PRPP) to UMP and diphosphate. This is Uracil phosphoribosyltransferase from Xanthomonas campestris pv. campestris (strain 8004).